A 158-amino-acid polypeptide reads, in one-letter code: Cyclic pyranopterin monophosphate synthase (158 aa).

Substrate contacts are provided by residues 74–76 (MCH) and 112–113 (ME). Asp-127 is an active-site residue.

It belongs to the MoaC family. In terms of assembly, homohexamer; trimer of dimers.

The enzyme catalyses (8S)-3',8-cyclo-7,8-dihydroguanosine 5'-triphosphate = cyclic pyranopterin phosphate + diphosphate. It participates in cofactor biosynthesis; molybdopterin biosynthesis. Functionally, catalyzes the conversion of (8S)-3',8-cyclo-7,8-dihydroguanosine 5'-triphosphate to cyclic pyranopterin monophosphate (cPMP). The chain is Cyclic pyranopterin monophosphate synthase from Thermoanaerobacter sp. (strain X514).